Reading from the N-terminus, the 415-residue chain is MTSSKTGQITIRSIGAGGDGVANLPDGQIYVPFTLPGEVVNVARDKNRATLMALLEASPERQNPACRHFEDCGGCALQHWQDEPYRLWKRELVVGALKGRGIDVEVAPLVACNPHTRRRAVFAARKTEKGVLLGFNRHQSHEIIDIVECPVTVPEIIARLDDLREVGALLAPGSGPFKLAATLTESGLDLAASGCGKLNDEQRRALTALVIKKDFARLSHEGEIIVEPKKPLIHFGKVPVPVPPGCFLQATAEAEETMAALVLAHLGKARRVADLFCGVGTFALRIAEKSAVHAVENDAAALAALDRGVRHVQGLKPVSIERRDLFRRPLMPKELLPYNAVVFDPPRAGAEEQALELAKSKVEKVVAISCNPVTLARDLAILQKGGYRIERVTPIDQFLWSAHVEAVAVLTKGRQ.

[4Fe-4S] cluster-binding residues include Cys-66, Cys-72, Cys-75, and Cys-149. Gln-249, Phe-276, Glu-296, and Asp-344 together coordinate S-adenosyl-L-methionine. Residue Cys-370 is the Nucleophile of the active site.

The protein belongs to the class I-like SAM-binding methyltransferase superfamily. RNA M5U methyltransferase family.

This is an uncharacterized protein from Brucella suis biovar 1 (strain 1330).